Reading from the N-terminus, the 89-residue chain is MAKESMKAREVKREKTVAKYAEKRKALLEAGDYEGLQRLPKNASPVRLHNRCKLTGRPRGYIRQFGISRVTFREMANNGLIPGVKKASW.

It belongs to the universal ribosomal protein uS14 family. As to quaternary structure, part of the 30S ribosomal subunit. Contacts proteins S3 and S10.

Functionally, binds 16S rRNA, required for the assembly of 30S particles and may also be responsible for determining the conformation of the 16S rRNA at the A site. This chain is Small ribosomal subunit protein uS14, found in Flavobacterium johnsoniae (strain ATCC 17061 / DSM 2064 / JCM 8514 / BCRC 14874 / CCUG 350202 / NBRC 14942 / NCIMB 11054 / UW101) (Cytophaga johnsonae).